A 201-amino-acid polypeptide reads, in one-letter code: Esterase TesA (201 aa).

A signal peptide spans M1–A21. The active-site Nucleophile is S30. Residues D177 and H180 contribute to the active site.

The protein belongs to the 'GDSL' lipolytic enzyme family.

It is found in the secreted. The enzyme catalyses a carboxylic ester + H2O = an alcohol + a carboxylate + H(+). Esterase that exhibits the highest activity towards Tween detergents and p-nitrophenyl esters of short acyl chain length. Also displays a low thioesterase activity towards palmitoyl-coenzyme A, but is not active towards acetyl-coenzyme A. The sequence is that of Esterase TesA (tesA) from Pseudomonas aeruginosa (strain ATCC 15692 / DSM 22644 / CIP 104116 / JCM 14847 / LMG 12228 / 1C / PRS 101 / PAO1).